A 503-amino-acid polypeptide reads, in one-letter code: Lysine--tRNA ligase (503 aa).

Positions 413 and 420 each coordinate Mg(2+).

This sequence belongs to the class-II aminoacyl-tRNA synthetase family. Homodimer. Mg(2+) serves as cofactor.

The protein localises to the cytoplasm. The enzyme catalyses tRNA(Lys) + L-lysine + ATP = L-lysyl-tRNA(Lys) + AMP + diphosphate. In Actinobacillus succinogenes (strain ATCC 55618 / DSM 22257 / CCUG 43843 / 130Z), this protein is Lysine--tRNA ligase.